The chain runs to 235 residues: Purine nucleoside phosphorylase DeoD-type (235 aa).

Residue H4 participates in a purine D-ribonucleoside binding. Phosphate is bound by residues G20, R24, R43, and 87–90; that span reads RVGT. A purine D-ribonucleoside-binding positions include 179–181 and 203–204; these read EME and SD. The Proton donor role is filled by D204.

Belongs to the PNP/UDP phosphorylase family. In terms of assembly, homohexamer; trimer of homodimers.

It catalyses the reaction a purine D-ribonucleoside + phosphate = a purine nucleobase + alpha-D-ribose 1-phosphate. It carries out the reaction a purine 2'-deoxy-D-ribonucleoside + phosphate = a purine nucleobase + 2-deoxy-alpha-D-ribose 1-phosphate. Catalyzes the reversible phosphorolytic breakdown of the N-glycosidic bond in the beta-(deoxy)ribonucleoside molecules, with the formation of the corresponding free purine bases and pentose-1-phosphate. The protein is Purine nucleoside phosphorylase DeoD-type of Clostridium perfringens (strain ATCC 13124 / DSM 756 / JCM 1290 / NCIMB 6125 / NCTC 8237 / Type A).